Here is a 313-residue protein sequence, read N- to C-terminus: 4-diphosphocytidyl-2-C-methyl-D-erythritol kinase (313 aa).

Lysine 10 is an active-site residue. 95–105 (PVTAGLGGGSS) lines the ATP pocket. Residue aspartate 136 is part of the active site. The tract at residues 289–313 (HPRVSPWRSPRSASSPSTRRSSRPT) is disordered. Residues 292-307 (VSPWRSPRSASSPSTR) are compositionally biased toward low complexity.

The protein belongs to the GHMP kinase family. IspE subfamily.

The enzyme catalyses 4-CDP-2-C-methyl-D-erythritol + ATP = 4-CDP-2-C-methyl-D-erythritol 2-phosphate + ADP + H(+). It functions in the pathway isoprenoid biosynthesis; isopentenyl diphosphate biosynthesis via DXP pathway; isopentenyl diphosphate from 1-deoxy-D-xylulose 5-phosphate: step 3/6. Its function is as follows. Catalyzes the phosphorylation of the position 2 hydroxy group of 4-diphosphocytidyl-2C-methyl-D-erythritol. This chain is 4-diphosphocytidyl-2-C-methyl-D-erythritol kinase, found in Anaeromyxobacter dehalogenans (strain 2CP-C).